A 203-amino-acid chain; its full sequence is Small ribosomal subunit protein uS4 (203 aa).

Residues 93–156 (RRLDNVVYRL…AKVPAILEAV (64 aa)) form the S4 RNA-binding domain.

The protein belongs to the universal ribosomal protein uS4 family. Part of the 30S ribosomal subunit. Contacts protein S5. The interaction surface between S4 and S5 is involved in control of translational fidelity.

One of the primary rRNA binding proteins, it binds directly to 16S rRNA where it nucleates assembly of the body of the 30S subunit. In terms of biological role, with S5 and S12 plays an important role in translational accuracy. This chain is Small ribosomal subunit protein uS4, found in Streptococcus mutans serotype c (strain ATCC 700610 / UA159).